A 230-amino-acid polypeptide reads, in one-letter code: Large ribosomal subunit protein uL3 (230 aa).

Disordered stretches follow at residues 125-149 and 210-230; these read QAIG…SLGD and PNPK…VKNE.

It belongs to the universal ribosomal protein uL3 family. Part of the 50S ribosomal subunit. Forms a cluster with proteins L14 and L19.

Its function is as follows. One of the primary rRNA binding proteins, it binds directly near the 3'-end of the 23S rRNA, where it nucleates assembly of the 50S subunit. The protein is Large ribosomal subunit protein uL3 of Mesomycoplasma hyopneumoniae (strain J / ATCC 25934 / NCTC 10110) (Mycoplasma hyopneumoniae).